A 271-amino-acid polypeptide reads, in one-letter code: Hachiman protein HamA (271 aa).

Component of antiviral defense system Hachiman, composed of HamA and HamB. Expression of Hachiman in B.subtilis (strain BEST7003) confers resistance to phages phi105, phi29, phi3T, rho14, SBSphiJ, SpBeta and SPR. In Bacillus cereus, this protein is Hachiman protein HamA.